The chain runs to 663 residues: Subtilisin-like serine protease (663 aa).

The N-terminal stretch at 1–23 is a signal peptide; sequence MKKFGAVVLALFLVGLMAGSVLA. Positions 24 to 136 are cleaved as a propeptide — removed in mature form; the sequence is APQKPAVRNV…IQEDYVVKVA (113 aa). The Peptidase S8 domain occupies 139-439; it reads TEGLDESAAQ…AGRVNAYKAA (301 aa). Catalysis depends on charge relay system residues Asp170, His203, and Ser382. Residues Pro420, Ile423, Asp483, Leu484, Asp485, Asp497, Tyr498, Thr501, and Glu507 each contribute to the Ca(2+) site. The interval 537–565 is disordered; it reads VSDGSLGQPSGGGSEPSPSPSPEPTVDEK. Residues 563-663 constitute a propeptide, removed in mature form; the sequence is DEKTFTGTVH…YQLDAKVYYG (101 aa).

Belongs to the peptidase S8 family. Monomer.

The catalysed reaction is Hydrolysis of proteins with broad specificity for peptide bonds, and a preference for a large uncharged residue in P1. Hydrolyzes peptide amides.. Resistant to treatment with 5% SDS, 8 M urea, 10% Triton X-100 or 10% Tween-20. Fully active although less stable in the presence of 10 mM EDTA. Activity not affected by the absence or presence of 10 mM CaCl(2). Unstable in the presence of 2 M or over GdnHCl and loses 35% and 99% of its activity upon incubation with 2 and 4 M GdnHCl, respectively, for 1 hour at 55 degrees Celsius. Nearly fully loses activity upon incubation at pH 2.0. Its function is as follows. Serine protease with a broad substrate specificity. The sequence is that of Subtilisin-like serine protease from Thermococcus kodakarensis (strain ATCC BAA-918 / JCM 12380 / KOD1) (Pyrococcus kodakaraensis (strain KOD1)).